A 179-amino-acid chain; its full sequence is MLTRAKKEQLVQEMTDRFSKASLILFTDYKGMDVQTISELRGQLYEKFEDKARYQVAKNTLIRLALRNASYEEEEWKEQVTGTTAILTIVDADPIEAIKIVYDFSKKKKLPVLRGCYLEKVFHDESKIPDLAQLPSREQLIAMVVSGFAAPISGLVYSLNGIISKLVYALNAIKDKKSE.

It belongs to the universal ribosomal protein uL10 family. In terms of assembly, part of the ribosomal stalk of the 50S ribosomal subunit. The N-terminus interacts with L11 and the large rRNA to form the base of the stalk. The C-terminus forms an elongated spine to which L12 dimers bind in a sequential fashion forming a multimeric L10(L12)X complex.

In terms of biological role, forms part of the ribosomal stalk, playing a central role in the interaction of the ribosome with GTP-bound translation factors. The chain is Large ribosomal subunit protein uL10 from Kosmotoga olearia (strain ATCC BAA-1733 / DSM 21960 / TBF 19.5.1).